Consider the following 332-residue polypeptide: MNIRERKRKHLEACLEGEVAYQKTTTGLEGFRLRYQALAGLALGEVDLTTPFLGKTLKAPFLIGAMTGGEENGERINLALAEAAEALGVGMMLGSGRILLERPEALRSFRVRKVAPKALLIANLGLAQLRRYGRDDLLRLVEALEADALAFHVNPLQEAVQRGDTDFRGLVERLAELLPLPFPVMVKEVGHGLSREAALALRDLPLAAVDVAGAGGTSWARVEEWVRFGEVRHPELCEIGIPTARAILEVREVLPHLPLVASGGVYTGTDGAKALALGADLLAVARPLLRPALEGAERVAAWIGDYLEELRTALFAIGAKNPKEARGRVERV.

6 to 7 (RK) is a binding site for substrate. FMN is bound by residues 65–67 (AMT), Ser-95, and Asn-123. Substrate is bound at residue 95–97 (SGR). Gln-157 contributes to the substrate binding site. Residue Glu-158 coordinates Mg(2+). FMN-binding positions include Lys-187, Thr-217, 264-266 (GVY), Ala-285, and 285-286 (AR).

It belongs to the IPP isomerase type 2 family. Homooctamer. Dimer of tetramers. It depends on FMN as a cofactor. NADPH is required as a cofactor. The cofactor is Mg(2+).

It is found in the cytoplasm. It catalyses the reaction isopentenyl diphosphate = dimethylallyl diphosphate. Its activity is regulated as follows. Competitively inhibited by N,N-dimethyl-2-amino-1-ethyl diphosphate (NIPP) and isopentyl diphosphate. Involved in the biosynthesis of isoprenoids. Catalyzes the 1,3-allylic rearrangement of the homoallylic substrate isopentenyl (IPP) to its allylic isomer, dimethylallyl diphosphate (DMAPP). This Thermus thermophilus (strain ATCC BAA-163 / DSM 7039 / HB27) protein is Isopentenyl-diphosphate delta-isomerase.